The sequence spans 246 residues: MSHINVEKKLNFVNKLNNVNNRVLKIENLALAYDGKRILDNINMFMERGDIITILGPNGGGKTSLVKAIAGINKNYTGNIVLAENTKISYMPQNFSISNLMPITVEYFLLNSSFKRLKKNQSIITETIELAGIGNILKNQVLEISAGQTQLLLLARCLIAEPDLIILDEPVSAMDINARAKFYDIINKIAKKRLVSILMTSHDLNSALPSSDYIICINNTIYCQGKPDEIMKNRTLNEIFSSYAAK.

Positions Leu-24–Tyr-243 constitute an ABC transporter domain. An ATP-binding site is contributed by Gly-56–Thr-63.

Belongs to the ABC transporter superfamily. Zinc importer (TC 3.A.1.15.5) family. In terms of assembly, the complex is composed of two ATP-binding proteins (ZnuC), two transmembrane proteins (ZnuB) and a solute-binding protein (ZnuA).

The protein localises to the cell membrane. It carries out the reaction Zn(2+)(out) + ATP(in) + H2O(in) = Zn(2+)(in) + ADP(in) + phosphate(in) + H(+)(in). Part of the ABC transporter complex ZnuABC involved in zinc import. Responsible for energy coupling to the transport system. The polypeptide is Zinc import ATP-binding protein ZnuC (Wolbachia pipientis wMel).